The sequence spans 161 residues: MEYNTSELCDIYLDQVDVIEPMFNSYGGRSSFGGQITTVKCFEDNALLRTVLQQPGVGRVLLVDGGGSLRRALIDADIALLATENEWEGLIVYGSVRNVDDLDELEIGIQAIASIPVGADQQGVGDVDIAVNFGGVTFLPEDHIYADNTGVILSPEPLDIE.

The protein belongs to the RraA family. As to quaternary structure, homotrimer. Binds to both RNA-binding sites in the C-terminal region of Rne and to RhlB.

It localises to the cytoplasm. Globally modulates RNA abundance by binding to RNase E (Rne) and regulating its endonucleolytic activity. Can modulate Rne action in a substrate-dependent manner by altering the composition of the degradosome. Modulates RNA-binding and helicase activities of the degradosome. This chain is Regulator of ribonuclease activity A, found in Photobacterium profundum (strain SS9).